A 441-amino-acid polypeptide reads, in one-letter code: Keratin, type I cytoskeletal 17 (441 aa).

Residues 1-23 (MTTTIRHFSSGSIKGSSGLAGGS) form a disordered region. The tract at residues 1–91 (MTTTIRHFSS…GGVDGLLVGG (91 aa)) is head. The segment covering 9 to 23 (SSGSIKGSSGLAGGS) has biased composition (low complexity). The residue at position 12 (S12) is a Phosphoserine. K14 participates in a covalent cross-link: Glycyl lysine isopeptide (Lys-Gly) (interchain with G-Cter in SUMO1); alternate. A Glycyl lysine isopeptide (Lys-Gly) (interchain with G-Cter in SUMO2); alternate cross-link involves residue K14. Residues S24, S30, S32, and S37 each carry the phosphoserine modification. Residue S42 is modified to Phosphoserine; by RPS6KA1. Positions 92–128 (EKATMQNLNDRLASYLDKVRALEEANTELELKIRDWY) are coil 1A. Residues 92 to 403 (EKATMQNLND…RLLEGEDAHL (312 aa)) enclose the IF rod domain. T118 bears the Phosphothreonine mark. Residues 129–146 (QKQAPGPAPDYSSYFKTI) are linker 1. The coil 1B stretch occupies residues 147–238 (EDLRNKIHTA…NHEEEMKALR (92 aa)). The tract at residues 239-258 (GQVGGEINVEMDAAPGVDLS) is linker 12. A coil 2 region spans residues 259-400 (RILNEMRDQY…TYRRLLEGED (142 aa)). K286 participates in a covalent cross-link: Glycyl lysine isopeptide (Lys-Gly) (interchain with G-Cter in SUMO2). A Phosphothreonine modification is found at T287. The residue at position 331 (S331) is a Phosphoserine. Residues 401–441 (AHLTQYKTKEPVTTRQVRTIVEEVQDGRVISSREQVHQTSH) form a tail region. Glycyl lysine isopeptide (Lys-Gly) (interchain with G-Cter in SUMO1); alternate cross-links involve residues K407 and K409. Residues K407 and K409 each participate in a glycyl lysine isopeptide (Lys-Gly) (interchain with G-Cter in SUMO2); alternate cross-link.

This sequence belongs to the intermediate filament family. As to quaternary structure, heterodimer of a type I and a type II keratin. KRT17 associates with KRT6 isomers (KRT6A or KRT6B). Interacts with TRADD and SFN. Post-translationally, phosphorylation at Ser-42 occurs in a growth- and stress-dependent fashion in skin keratinocytes, it has no effect on filament organization.

Its subcellular location is the cytoplasm. Functionally, type I keratin involved in the formation and maintenance of various skin appendages, specifically in determining shape and orientation of hair. Required for the correct growth of hair follicles, in particular for the persistence of the anagen (growth) state. Modulates the function of TNF-alpha in the specific context of hair cycling. Regulates protein synthesis and epithelial cell growth through binding to the adapter protein SFN and by stimulating Akt/mTOR pathway. Involved in tissue repair. May be a marker of basal cell differentiation in complex epithelia and therefore indicative of a certain type of epithelial 'stem cells'. Acts as a promoter of epithelial proliferation by acting a regulator of immune response in skin: promotes Th1/Th17-dominated immune environment contributing to the development of basaloid skin tumors. May act as an autoantigen in the immunopathogenesis of psoriasis, with certain peptide regions being a major target for autoreactive T-cells and hence causing their proliferation. In Bos taurus (Bovine), this protein is Keratin, type I cytoskeletal 17.